A 294-amino-acid polypeptide reads, in one-letter code: Phosphoribosylaminoimidazole-succinocarboxamide synthase (294 aa).

This sequence belongs to the SAICAR synthetase family.

It carries out the reaction 5-amino-1-(5-phospho-D-ribosyl)imidazole-4-carboxylate + L-aspartate + ATP = (2S)-2-[5-amino-1-(5-phospho-beta-D-ribosyl)imidazole-4-carboxamido]succinate + ADP + phosphate + 2 H(+). It participates in purine metabolism; IMP biosynthesis via de novo pathway; 5-amino-1-(5-phospho-D-ribosyl)imidazole-4-carboxamide from 5-amino-1-(5-phospho-D-ribosyl)imidazole-4-carboxylate: step 1/2. The sequence is that of Phosphoribosylaminoimidazole-succinocarboxamide synthase from Thermoplasma volcanium (strain ATCC 51530 / DSM 4299 / JCM 9571 / NBRC 15438 / GSS1).